The sequence spans 484 residues: MIQVLLVTICLAVFPYQGSSIILESGNVDDYEVVYPRRVSALPKGAVQPKYEDAMQYEFKVNGEAVVLHLEKNKGLFSEDYSETHYSPDGREITTYPSVEDHCYYHGRIHNDADSTASISACDGLKGYFKLQGETYLIEPLKLPDSEAHAVYKYENIEKEDEAPKMCGVTQNWESDESIKKASQLNLTPLQQRFLQRYVKLAIVVDYRMYIKYNRDSNKITVRAHEMVNHVNEMYKPLNITITLSLLQIWSQNDLITVQPASSITLRLFGNWRKTVLLNQQNHDNAQLLTDIVFNGRTIGKAPVAGMCQPDRSVGVVRDYSSNVFVVAVIMTHELGHNLGMEHDEDKNEKKCKCDTCIMAPAISDPPAQLFSDCSKNDYQLFLTVYNPQCILNAPLRTDTVSTPVSGNEFLEAGEECDCGSPENPCCDAATCKLRPGAQCAEGLCCDQCRFKKKRTICRRARGDNPDDRCTGQSADCPRNGLYG.

Positions 1–20 (MIQVLLVTICLAVFPYQGSS) are cleaved as a signal peptide. Residues 21–190 (IILESGNVDD…KASQLNLTPL (170 aa)) constitute a propeptide that is removed on maturation. Residues 197-395 (RYVKLAIVVD…YNPQCILNAP (199 aa)) form the Peptidase M12B domain. Asparagine 239 is a glycosylation site (N-linked (GlcNAc...) asparagine). Cystine bridges form between cysteine 308–cysteine 390, cysteine 352–cysteine 374, and cysteine 354–cysteine 357. Histidine 333 is a binding site for Zn(2+). The active site involves glutamate 334. 2 residues coordinate Zn(2+): histidine 337 and histidine 343. The propeptide occupies 396–413 (LRTDTVSTPVSGNEFLEA). The 82-residue stretch at 403–484 (TPVSGNEFLE…ADCPRNGLYG (82 aa)) folds into the Disintegrin domain. 6 disulfide bridges follow: cysteine 417–cysteine 432, cysteine 419–cysteine 427, cysteine 426–cysteine 449, cysteine 440–cysteine 446, cysteine 445–cysteine 470, and cysteine 458–cysteine 477. Residues 462-464 (RGD) carry the Cell attachment site motif.

This sequence belongs to the venom metalloproteinase (M12B) family. P-II subfamily. P-IIa sub-subfamily. As to quaternary structure, monomer. It depends on Zn(2+) as a cofactor. In terms of tissue distribution, expressed by the venom gland.

The protein resides in the secreted. Impairs hemostasis in the envenomed animal. Functionally, inhibits platelet aggregation induced by ADP, thrombin, platelet-activating factor and collagen. Acts by inhibiting fibrinogen interaction with platelet receptors GPIIb/GPIIIa (ITGA2B/ITGB3). The chain is Zinc metalloproteinase/disintegrin PMMP-2 from Protobothrops mucrosquamatus (Taiwan habu).